The following is a 165-amino-acid chain: Lithostathine (165 aa).

The signal sequence occupies residues 1-21 (MTRNKYFILLSCLMVLSPSQG). Position 22 is a pyrrolidone carboxylic acid (Gln-22). The region spanning 33 to 163 (ITCPEGSNAY…DAQLSFVCKF (131 aa)) is the C-type lectin domain. Cystine bridges form between Cys-35–Cys-46, Cys-63–Cys-161, and Cys-136–Cys-153. Asn-129 carries N-linked (GlcNAc...) asparagine glycosylation.

As to expression, expressed only in regenerating islets, but not in normal pancreatic islets, insulinomas or regenerating liver.

The protein localises to the secreted. Its function is as follows. Might act as an inhibitor of spontaneous calcium carbonate precipitation. This Rattus norvegicus (Rat) protein is Lithostathine (Reg1).